Here is a 399-residue protein sequence, read N- to C-terminus: MAKEKFVKNKPHVNIGTIGHVDHGKTTLSAAISAVLATKGLCELKDYDAIDNAPEERERGITIATSHIEYETENRHYAHVDCPGHADYVKNMITGAAQMDGAILVVSAADGPMPQTREHILLSRQVGVPYIVVFLNKEDMVDDAELLELVEMEVRELLSNYDFPGDDTPIVAGSALKALEEAKTGNVGEWGEKVLKLMAEVDRYIPTPERDVDKPFLMPVEDVFSIAGRGTVVTGRIERGVVKVGDEVEIVGIRNTQKTTVTGVEMFRKELDKGEAGDNVGVLLRGTKKEDVERGMVLCKIGSITPHTNFEGEVYVLSKEEGGRHTPFFNGYRPQFYVRTTDVTGSISLPEGVEMVMPGDNVKINVELIAPVALEEGTRFAIREGGRTVGAGVVTKITK.

The 200-residue stretch at 10–209 (KPHVNIGTIG…EVDRYIPTPE (200 aa)) folds into the tr-type G domain. Positions 19-26 (GHVDHGKT) are G1. Residue 19–26 (GHVDHGKT) coordinates GTP. Thr26 is a Mg(2+) binding site. The tract at residues 60–64 (GITIA) is G2. The interval 81–84 (DCPG) is G3. Residues 81–85 (DCPGH) and 136–139 (NKED) each bind GTP. The segment at 136–139 (NKED) is G4. The interval 174–176 (SAL) is G5.

This sequence belongs to the TRAFAC class translation factor GTPase superfamily. Classic translation factor GTPase family. EF-Tu/EF-1A subfamily. Monomer.

It is found in the cytoplasm. It carries out the reaction GTP + H2O = GDP + phosphate + H(+). Functionally, GTP hydrolase that promotes the GTP-dependent binding of aminoacyl-tRNA to the A-site of ribosomes during protein biosynthesis. The chain is Elongation factor Tu from Wolinella succinogenes (strain ATCC 29543 / DSM 1740 / CCUG 13145 / JCM 31913 / LMG 7466 / NCTC 11488 / FDC 602W) (Vibrio succinogenes).